The following is a 245-amino-acid chain: uncharacterized protein (245 aa).

6 helical membrane passes run 38-58, 68-88, 100-120, 129-149, 194-214, and 217-237; these read IYPA…AIFI, TIEL…QGYF, IWSL…LILA, VLFI…FVSA, VNNI…FLMN, and IAFI…LIIH.

Belongs to the acyltransferase 3 family.

The protein resides in the cell membrane. This is an uncharacterized protein from Haemophilus influenzae (strain ATCC 51907 / DSM 11121 / KW20 / Rd).